The following is a 187-amino-acid chain: UPF0301 protein plu1183 (187 aa).

This sequence belongs to the UPF0301 (AlgH) family.

This Photorhabdus laumondii subsp. laumondii (strain DSM 15139 / CIP 105565 / TT01) (Photorhabdus luminescens subsp. laumondii) protein is UPF0301 protein plu1183.